The sequence spans 198 residues: Probable thymidylate kinase (198 aa).

G7 to S14 lines the ATP pocket.

This sequence belongs to the thymidylate kinase family.

The enzyme catalyses dTMP + ATP = dTDP + ADP. This chain is Probable thymidylate kinase, found in Methanocorpusculum labreanum (strain ATCC 43576 / DSM 4855 / Z).